A 291-amino-acid polypeptide reads, in one-letter code: ATP synthase gamma chain (291 aa).

It belongs to the ATPase gamma chain family. In terms of assembly, F-type ATPases have 2 components, CF(1) - the catalytic core - and CF(0) - the membrane proton channel. CF(1) has five subunits: alpha(3), beta(3), gamma(1), delta(1), epsilon(1). CF(0) has three main subunits: a, b and c.

Its subcellular location is the cell inner membrane. In terms of biological role, produces ATP from ADP in the presence of a proton gradient across the membrane. The gamma chain is believed to be important in regulating ATPase activity and the flow of protons through the CF(0) complex. This chain is ATP synthase gamma chain, found in Burkholderia lata (strain ATCC 17760 / DSM 23089 / LMG 22485 / NCIMB 9086 / R18194 / 383).